Here is a 916-residue protein sequence, read N- to C-terminus: Oxoglutarate dehydrogenase (916 aa).

Belongs to the alpha-ketoglutarate dehydrogenase family. As to quaternary structure, homodimer. Part of the 2-oxoglutarate dehydrogenase (OGDH) complex composed of E1 (2-oxoglutarate dehydrogenase), E2 (dihydrolipoamide succinyltransferase) and E3 (dihydrolipoamide dehydrogenase); the complex contains multiple copies of the three enzymatic components (E1, E2 and E3). Thiamine diphosphate serves as cofactor.

The catalysed reaction is N(6)-[(R)-lipoyl]-L-lysyl-[protein] + 2-oxoglutarate + H(+) = N(6)-[(R)-S(8)-succinyldihydrolipoyl]-L-lysyl-[protein] + CO2. In terms of biological role, E1 component of the 2-oxoglutarate dehydrogenase (OGDH) complex which catalyzes the decarboxylation of 2-oxoglutarate, the first step in the conversion of 2-oxoglutarate to succinyl-CoA and CO(2). This is Oxoglutarate dehydrogenase (sucA) from Buchnera aphidicola subsp. Baizongia pistaciae (strain Bp).